The primary structure comprises 269 residues: Rhamnulose-1-phosphate aldolase (269 aa).

The active site involves Glu-119. Residues His-142, His-144, and His-214 each contribute to the Zn(2+) site.

This sequence belongs to the aldolase class II family. RhaD subfamily. Zn(2+) serves as cofactor.

It is found in the cytoplasm. It catalyses the reaction L-rhamnulose 1-phosphate = (S)-lactaldehyde + dihydroxyacetone phosphate. Its pathway is carbohydrate degradation; L-rhamnose degradation; glycerone phosphate from L-rhamnose: step 3/3. Functionally, catalyzes the reversible cleavage of L-rhamnulose-1-phosphate to dihydroxyacetone phosphate (DHAP) and L-lactaldehyde. The polypeptide is Rhamnulose-1-phosphate aldolase (Bacteroides thetaiotaomicron (strain ATCC 29148 / DSM 2079 / JCM 5827 / CCUG 10774 / NCTC 10582 / VPI-5482 / E50)).